The sequence spans 152 residues: Superoxide dismutase [Cu-Zn] (152 aa).

The Cu cation site is built by His-45, His-47, and His-62. A disulfide bond links Cys-56 and Cys-145. Zn(2+)-binding residues include His-62, His-70, His-79, and Asp-82. His-119 is a Cu cation binding site.

Belongs to the Cu-Zn superoxide dismutase family. In terms of assembly, homodimer. Requires Cu cation as cofactor. It depends on Zn(2+) as a cofactor.

It is found in the cytoplasm. It catalyses the reaction 2 superoxide + 2 H(+) = H2O2 + O2. In terms of biological role, destroys radicals which are normally produced within the cells and which are toxic to biological systems. The polypeptide is Superoxide dismutase [Cu-Zn] (SODCC) (Spinacia oleracea (Spinach)).